Consider the following 274-residue polypeptide: Dermonecrotic toxin SdSicTox-betaIIB1aii (274 aa).

His5 is an active-site residue. Mg(2+)-binding residues include Glu25 and Asp27. Catalysis depends on His41, which acts as the Nucleophile. Intrachain disulfides connect Cys45–Cys51 and Cys47–Cys190. A Mg(2+)-binding site is contributed by Asp85.

Belongs to the arthropod phospholipase D family. Class II subfamily. Requires Mg(2+) as cofactor. As to expression, expressed by the venom gland.

It is found in the secreted. It carries out the reaction an N-(acyl)-sphingosylphosphocholine = an N-(acyl)-sphingosyl-1,3-cyclic phosphate + choline. The catalysed reaction is an N-(acyl)-sphingosylphosphoethanolamine = an N-(acyl)-sphingosyl-1,3-cyclic phosphate + ethanolamine. The enzyme catalyses a 1-acyl-sn-glycero-3-phosphocholine = a 1-acyl-sn-glycero-2,3-cyclic phosphate + choline. It catalyses the reaction a 1-acyl-sn-glycero-3-phosphoethanolamine = a 1-acyl-sn-glycero-2,3-cyclic phosphate + ethanolamine. Its function is as follows. Dermonecrotic toxins cleave the phosphodiester linkage between the phosphate and headgroup of certain phospholipids (sphingolipid and lysolipid substrates), forming an alcohol (often choline) and a cyclic phosphate. This toxin acts on sphingomyelin (SM). It may also act on ceramide phosphoethanolamine (CPE), lysophosphatidylcholine (LPC) and lysophosphatidylethanolamine (LPE), but not on lysophosphatidylserine (LPS), and lysophosphatidylglycerol (LPG). It acts by transphosphatidylation, releasing exclusively cyclic phosphate products as second products. Induces dermonecrosis, hemolysis, increased vascular permeability, edema, inflammatory response, and platelet aggregation. The polypeptide is Dermonecrotic toxin SdSicTox-betaIIB1aii (Sicarius cf. damarensis (strain GJB-2008) (Six-eyed sand spider)).